The primary structure comprises 99 residues: Large ribosomal subunit protein bL27 (99 aa).

A propeptide spanning residues methionine 1–phenylalanine 12 is cleaved from the precursor. The interval histidine 15–arginine 36 is disordered.

This sequence belongs to the bacterial ribosomal protein bL27 family. In terms of processing, the N-terminus is cleaved by ribosomal processing cysteine protease Prp.

In Lactobacillus johnsonii (strain CNCM I-12250 / La1 / NCC 533), this protein is Large ribosomal subunit protein bL27.